The following is a 456-amino-acid chain: Exodeoxyribonuclease 7 large subunit (456 aa).

The protein belongs to the XseA family. Heterooligomer composed of large and small subunits.

It is found in the cytoplasm. It carries out the reaction Exonucleolytic cleavage in either 5'- to 3'- or 3'- to 5'-direction to yield nucleoside 5'-phosphates.. In terms of biological role, bidirectionally degrades single-stranded DNA into large acid-insoluble oligonucleotides, which are then degraded further into small acid-soluble oligonucleotides. The protein is Exodeoxyribonuclease 7 large subunit of Shigella dysenteriae serotype 1 (strain Sd197).